Consider the following 1667-residue polypeptide: MSLPFYQRSHQHYDLSYRNKDLRTTMSHYQQEKKRSAVYTHGSTAYSSRSLAARRQESEAFSQASATSYQQQASQTYSLGASSSSRHSQGSEVSRKTASAYDYGYSHGLTDSSLLLEDYSSKLSPQTKRAKRSLLSGEETGSLPGNYLVPIYSGRQVHISGIRDSEEERIKEAAAYIAQKTLLASEEAIAASKQSTASKQSATSKRTTSTLQREETFEKKSRNIAIREKAEELSLKKTLEETQTYHGKLNEDHLLHAPEFIIKPRSHTVWEKENVKLHCSVAGWPEPRLTWYKNQVPINVHANPGKYIIESRYGMHTLEISKCDFEDTAQYRASAMNVQGELSAYASVVVKRYKGELDESLLRGGVSMPLSFAVTPYGYASKFEIHFDDKFDVSFGREGETMSLGCRVVITPEIKHFQPEVQWYRNGAPVSPSKWVQPHWSGDRATLTFSHLNKEDEGLYTIRVRMGEYYEQYSAYVFVRDADAEIEGAPAAPLDVVSLDANKDYIIISWKQPAVDGGSPILGYFIDKCEVGTDTWSQCNDTPVKFARFPVTGLIEGRSYIFRVRAVNKTGIGLPSRVSEPVAALDPAEKARLKSHPSAPWTGQIIVTEEEPTEGVIPGPPTDLSVTEATRSYVVLSWKPPGQRGHEGIMYFVEKCDVGAENWQRVNTELPVKSPRFALFDLVEGKSYRFRVRCSNSAGVGEPSETTEVTVVGDKLDIPKAPGKIIPSRNTDTSVVVSWEESRDAKELVGYYIEASVVGSGKWEPCNNNPVKGSRFTCHGLTTAQSYIFRVRAVNAAGLSEYSQDSEAIEVKAAIGGGVSPDVWPQLSDTPGGLTDSRGGMNGASPPTSQKDALLGSNPNKPSPPSSPSSRGQKEVSTVSESVQEPLSSPPQEAAPEEEQSQSEPPKKKKDPVAVPSAPYDITCLESFRDSMVLGWKQPDTTGGAEITGYYVNYREVVGEVPGKWREANIKAVSDAAYKISNLKENTLYQFQVSAMNIAGLGAPSTVSECFKCEEWTIAVPGPPHSVKLSEVRKNSLVLQWKPPVYSGRTPVTGYFVDLKEASAKDDQWRGLNEAAIVNKYLRVQGLKEGTSYVFRVRAVNQAGVGKPSDLAGPVVAETRPGTKEVVVSVDDDGVISLNFECDQMTPKSEFVWSKDYVPTEDSPRLEVENKGDKTKMTFKDLGTDDLGTYSCDVTDTDGIASSYLIDEEEMKRLLALSQEHKFPTVPTKSELAVEILEKGQVRFWMQAEKLSSNAKVSYIFNEKEIFEGPKYKMHIDRNTGIIEMFMEKLQDEDEGTYTFQIQDGKATGHSTLVLIGDVYKKLQKEAEFQRQEWIRKQGPHFAEYLSWEVTGECNVLLKCKVANIKKETHIVWYKDEREISVDEKHDFKDGICTLLITEFSKKDAGFYEVILKDDRGKDKSRLKLVDEAFQDLMTEVCKKIALSATDLKIQSTAEGIRLYSFVCYYLDDLKVNWSHNGTGIKYTDRVKSGVTGEQIWLQINEPTPNDKGKYVMELFDGKTGHQKTVDLSGQAFDEAFAEFQRLKQAAIAEKNRARVLGGLPDVVTIQEGKALNLTCNVWGDPPPEVSWLKNEKPLTSDDHCSLKFEAGKTAFFTISGVSTADSGKYGLVVKNKYGSETSDFTVSVFIPEEELRKGAMEPPKGNQKSK.

Phosphoserine is present on residues Ser-124 and Ser-142. Low complexity predominate over residues 192 to 210 (SKQSTASKQSATSKRTTST). A disordered region spans residues 192–217 (SKQSTASKQSATSKRTTSTLQREETF). Ig-like C2-type domains lie at 258–349 (PEFI…ASVV) and 376–478 (PYGY…AYVF). 3 Fibronectin type-III domains span residues 492 to 587 (APLD…ALDP), 620 to 714 (PPTD…VVGD), and 721 to 814 (APGK…VKAA). Residues 818–915 (GVSPDVWPQL…PKKKKDPVAV (98 aa)) form a disordered region. Ser-863 and Ser-867 each carry phosphoserine. Over residues 885-894 (EPLSSPPQEA) the composition is skewed to low complexity. 2 consecutive Fibronectin type-III domains span residues 918 to 1016 (APYD…CEEW) and 1023 to 1122 (PPHS…TRPG). Ser-1036 carries the phosphoserine modification. Ig-like C2-type domains are found at residues 1114–1212 (PVVA…EEMK), 1340–1426 (PHFA…LKLV), and 1555–1644 (RVLG…FTVS).

In terms of assembly, homodimer. Interacts with TTN/titin and PNKD. As to expression, ubiquitously expressed in all striated muscles. Expressed in all fiber types.

It is found in the cytoplasm. The protein localises to the myofibril. The protein resides in the sarcomere. Its subcellular location is the m line. Its function is as follows. May link the intermediate filament cytoskeleton to the M-disk of the myofibrils in striated muscle. May also contact myosin filaments. Also binds beta-integrins. In Mus musculus (Mouse), this protein is Myomesin-1 (Myom1).